The chain runs to 331 residues: Large ribosomal subunit protein uL3 (331 aa).

The protein belongs to the universal ribosomal protein uL3 family. Part of the 50S ribosomal subunit. Forms a cluster with proteins L14 and L24e.

One of the primary rRNA binding proteins, it binds directly near the 3'-end of the 23S rRNA, where it nucleates assembly of the 50S subunit. The chain is Large ribosomal subunit protein uL3 from Archaeoglobus fulgidus (strain ATCC 49558 / DSM 4304 / JCM 9628 / NBRC 100126 / VC-16).